The following is a 361-amino-acid chain: tRNA 2-selenouridine synthase (361 aa).

In terms of domain architecture, Rhodanese spans 14-137 (LIADTPIIDV…LRQTAIQATI (124 aa)). Cys97 serves as the catalytic S-selanylcysteine intermediate.

This sequence belongs to the SelU family. In terms of assembly, monomer.

The catalysed reaction is 5-methylaminomethyl-2-thiouridine(34) in tRNA + selenophosphate + (2E)-geranyl diphosphate + H2O + H(+) = 5-methylaminomethyl-2-selenouridine(34) in tRNA + (2E)-thiogeraniol + phosphate + diphosphate. It catalyses the reaction 5-methylaminomethyl-2-thiouridine(34) in tRNA + (2E)-geranyl diphosphate = 5-methylaminomethyl-S-(2E)-geranyl-thiouridine(34) in tRNA + diphosphate. It carries out the reaction 5-methylaminomethyl-S-(2E)-geranyl-thiouridine(34) in tRNA + selenophosphate + H(+) = 5-methylaminomethyl-2-(Se-phospho)selenouridine(34) in tRNA + (2E)-thiogeraniol. The enzyme catalyses 5-methylaminomethyl-2-(Se-phospho)selenouridine(34) in tRNA + H2O = 5-methylaminomethyl-2-selenouridine(34) in tRNA + phosphate. Functionally, involved in the post-transcriptional modification of the uridine at the wobble position (U34) of tRNA(Lys), tRNA(Glu) and tRNA(Gln). Catalyzes the conversion of 2-thiouridine (S2U-RNA) to 2-selenouridine (Se2U-RNA). Acts in a two-step process involving geranylation of 2-thiouridine (S2U) to S-geranyl-2-thiouridine (geS2U) and subsequent selenation of the latter derivative to 2-selenouridine (Se2U) in the tRNA chain. In Escherichia coli O6:H1 (strain CFT073 / ATCC 700928 / UPEC), this protein is tRNA 2-selenouridine synthase.